The sequence spans 883 residues: Alanine--tRNA ligase (883 aa).

The Zn(2+) site is built by His563, His567, Cys677, and His681.

The protein belongs to the class-II aminoacyl-tRNA synthetase family. Requires Zn(2+) as cofactor.

It is found in the cytoplasm. It catalyses the reaction tRNA(Ala) + L-alanine + ATP = L-alanyl-tRNA(Ala) + AMP + diphosphate. In terms of biological role, catalyzes the attachment of alanine to tRNA(Ala) in a two-step reaction: alanine is first activated by ATP to form Ala-AMP and then transferred to the acceptor end of tRNA(Ala). Also edits incorrectly charged Ser-tRNA(Ala) and Gly-tRNA(Ala) via its editing domain. The sequence is that of Alanine--tRNA ligase from Cereibacter sphaeroides (strain ATCC 17025 / ATH 2.4.3) (Rhodobacter sphaeroides).